A 104-amino-acid chain; its full sequence is uncharacterized protein (104 aa).

Helical transmembrane passes span 26 to 46 (IGTG…FTFF) and 70 to 90 (GLLG…IIAI).

Its subcellular location is the membrane. This is an uncharacterized protein from Acanthamoeba polyphaga mimivirus (APMV).